A 415-amino-acid chain; its full sequence is Multifunctional CCA protein (415 aa).

The ATP site is built by Gly-8 and Arg-11. CTP is bound by residues Gly-8 and Arg-11. Mg(2+) contacts are provided by Glu-21 and Asp-23. ATP is bound by residues Arg-91, Arg-137, and Arg-140. CTP-binding residues include Arg-91, Arg-137, and Arg-140. The HD domain maps to 228–329; that stretch reads AGTHTLMALD…VELFEGLDLF (102 aa).

Belongs to the tRNA nucleotidyltransferase/poly(A) polymerase family. Bacterial CCA-adding enzyme type 1 subfamily. As to quaternary structure, monomer. Can also form homodimers and oligomers. Requires Mg(2+) as cofactor. Ni(2+) is required as a cofactor.

The enzyme catalyses a tRNA precursor + 2 CTP + ATP = a tRNA with a 3' CCA end + 3 diphosphate. The catalysed reaction is a tRNA with a 3' CCA end + 2 CTP + ATP = a tRNA with a 3' CCACCA end + 3 diphosphate. In terms of biological role, catalyzes the addition and repair of the essential 3'-terminal CCA sequence in tRNAs without using a nucleic acid template. Adds these three nucleotides in the order of C, C, and A to the tRNA nucleotide-73, using CTP and ATP as substrates and producing inorganic pyrophosphate. tRNA 3'-terminal CCA addition is required both for tRNA processing and repair. Also involved in tRNA surveillance by mediating tandem CCA addition to generate a CCACCA at the 3' terminus of unstable tRNAs. While stable tRNAs receive only 3'-terminal CCA, unstable tRNAs are marked with CCACCA and rapidly degraded. The polypeptide is Multifunctional CCA protein (Halorhodospira halophila (strain DSM 244 / SL1) (Ectothiorhodospira halophila (strain DSM 244 / SL1))).